The sequence spans 753 residues: 5-methyltetrahydropteroyltriglutamate--homocysteine methyltransferase (753 aa).

5-methyltetrahydropteroyltri-L-glutamate is bound by residues 17 to 20 (RELK) and K117. Residues 431 to 433 (IGS) and E484 each bind L-homocysteine. L-methionine-binding positions include 431-433 (IGS) and E484. Residues 515–516 (RC) and W561 each bind 5-methyltetrahydropteroyltri-L-glutamate. D599 is an L-homocysteine binding site. D599 contacts L-methionine. A 5-methyltetrahydropteroyltri-L-glutamate-binding site is contributed by E605. Positions 641, 643, and 665 each coordinate Zn(2+). H694 functions as the Proton donor in the catalytic mechanism. Residue C726 coordinates Zn(2+).

The protein belongs to the vitamin-B12 independent methionine synthase family. It depends on Zn(2+) as a cofactor.

It catalyses the reaction 5-methyltetrahydropteroyltri-L-glutamate + L-homocysteine = tetrahydropteroyltri-L-glutamate + L-methionine. The protein operates within amino-acid biosynthesis; L-methionine biosynthesis via de novo pathway; L-methionine from L-homocysteine (MetE route): step 1/1. Its function is as follows. Catalyzes the transfer of a methyl group from 5-methyltetrahydrofolate to homocysteine resulting in methionine formation. This Escherichia coli (strain SMS-3-5 / SECEC) protein is 5-methyltetrahydropteroyltriglutamate--homocysteine methyltransferase.